A 201-amino-acid polypeptide reads, in one-letter code: Glutathione peroxidase 1 (201 aa).

Residue Ser-32 is modified to Phosphoserine. Sec-47 is a catalytic residue. A non-standard amino acid (selenocysteine) is located at residue Sec-47. Residues Lys-86, Lys-112, and Lys-146 each carry the N6-acetyllysine; alternate modification. Residues Lys-86, Lys-112, and Lys-146 each carry the N6-succinyllysine; alternate modification. 2 positions are modified to phosphoserine: Ser-195 and Ser-199.

It belongs to the glutathione peroxidase family. As to quaternary structure, homotetramer. Interacts with MIEN1. In terms of processing, during periods of oxidative stress, Sec-47 may react with a superoxide radical, irreversibly lose hydroselenide and be converted to dehydroalanine.

Its subcellular location is the cytoplasm. It carries out the reaction 2 glutathione + H2O2 = glutathione disulfide + 2 H2O. It catalyses the reaction (12S)-hydroperoxy-(5Z,8Z,10E,14Z)-eicosatetraenoate + 2 glutathione = (12S)-hydroxy-(5Z,8Z,10E,14Z)-eicosatetraenoate + glutathione disulfide + H2O. Its function is as follows. Protects the hemoglobin in erythrocytes from oxidative breakdown. In platelets, plays a crucial role of glutathione peroxidase in the arachidonic acid metabolism. This chain is Glutathione peroxidase 1 (GPX1), found in Hylobates lar (Lar gibbon).